The sequence spans 288 residues: Protoheme IX farnesyltransferase 2 (288 aa).

The next 9 helical transmembrane spans lie at 8–28, 36–56, 85–105, 108–128, 131–151, 152–172, 211–231, 233–252, and 267–287; these read ITKPGIIFGNLISVAAGFFLA, LMLFLTTLAGVGLVIASGCVV, VAFVYALAMLLLGTALLFQLV, LSAVVVLLGYVYYVFFYTMWY, NSVYGTLVGSISGAVPPLVGY, LAVTNFISLEAILLFTMFCLW, AYVVAFGAVSLGLFLLGEAGY, YLAVAAVVCLMWTKVTFRSI, and VSLLVVMGISGVLGVELIPLA.

The protein belongs to the UbiA prenyltransferase family. Protoheme IX farnesyltransferase subfamily.

It is found in the cell inner membrane. The enzyme catalyses heme b + (2E,6E)-farnesyl diphosphate + H2O = Fe(II)-heme o + diphosphate. It functions in the pathway porphyrin-containing compound metabolism; heme O biosynthesis; heme O from protoheme: step 1/1. Its function is as follows. Converts heme B (protoheme IX) to heme O by substitution of the vinyl group on carbon 2 of heme B porphyrin ring with a hydroxyethyl farnesyl side group. The sequence is that of Protoheme IX farnesyltransferase 2 from Vibrio parahaemolyticus serotype O3:K6 (strain RIMD 2210633).